The primary structure comprises 67 residues: Probable archaeal histone 3 (67 aa).

Interaction with DNA stretches follow at residues 20–22 (RVS) and 54–57 (KTVK).

It belongs to the archaeal histone HMF family. Homodimer or heterodimer with another histone. Dimers then assemble into higher oligomers, with the DNA wrapped around the protein core.

The protein localises to the cytoplasm. The protein resides in the chromosome. Binds and compact DNA (95 to 150 base pairs) to form nucleosome-like structures that contain positive DNA supercoils. Increases the resistance of DNA to thermal denaturation (in vitro). This chain is Probable archaeal histone 3, found in Methanocaldococcus jannaschii (strain ATCC 43067 / DSM 2661 / JAL-1 / JCM 10045 / NBRC 100440) (Methanococcus jannaschii).